The chain runs to 291 residues: uncharacterized protein (291 aa).

Disordered stretches follow at residues 1–62, 220–242, and 255–291; these read MELR…SSKK, PLPA…TDKV, and ENNK…SRKK. Positions 18 to 41 are enriched in basic and acidic residues; it reads EPAKNKSERSIESNERVGTREAKS. Composition is skewed to polar residues over residues 42–58 and 226–236; these read ENTS…ATTD and PSLNLSPQKVP. The residue at position 267 (S267) is a Phosphoserine.

The protein localises to the cytoplasm. Its subcellular location is the nucleus. This is an uncharacterized protein from Saccharomyces cerevisiae (strain ATCC 204508 / S288c) (Baker's yeast).